The sequence spans 95 residues: Ragulator complex protein LAMTOR4 homolog (95 aa).

This sequence belongs to the LAMTOR4 family. Part of the Ragulator complex.

The protein localises to the lysosome. Regulator of the TOR pathway, a signaling cascade that promotes cell growth in response to growth factors, energy levels, and amino acids. As part of the Ragulator complex, may activate the TOR signaling cascade in response to amino acids. The protein is Ragulator complex protein LAMTOR4 homolog of Nematostella vectensis (Starlet sea anemone).